The primary structure comprises 129 residues: Small ribosomal subunit protein uS11 (129 aa).

This sequence belongs to the universal ribosomal protein uS11 family. In terms of assembly, part of the 30S ribosomal subunit. Interacts with proteins S7 and S18. Binds to IF-3.

Its function is as follows. Located on the platform of the 30S subunit, it bridges several disparate RNA helices of the 16S rRNA. Forms part of the Shine-Dalgarno cleft in the 70S ribosome. This is Small ribosomal subunit protein uS11 from Tolumonas auensis (strain DSM 9187 / NBRC 110442 / TA 4).